Here is a 312-residue protein sequence, read N- to C-terminus: Methionyl-tRNA formyltransferase (312 aa).

111–114 contributes to the (6S)-5,6,7,8-tetrahydrofolate binding site; that stretch reads SLLP.

Belongs to the Fmt family.

It catalyses the reaction L-methionyl-tRNA(fMet) + (6R)-10-formyltetrahydrofolate = N-formyl-L-methionyl-tRNA(fMet) + (6S)-5,6,7,8-tetrahydrofolate + H(+). Functionally, attaches a formyl group to the free amino group of methionyl-tRNA(fMet). The formyl group appears to play a dual role in the initiator identity of N-formylmethionyl-tRNA by promoting its recognition by IF2 and preventing the misappropriation of this tRNA by the elongation apparatus. The polypeptide is Methionyl-tRNA formyltransferase (Myxococcus xanthus (strain DK1622)).